Consider the following 272-residue polypeptide: Protein FAM210A (272 aa).

One can recognise a DUF1279 domain in the interval 117–229 (DKSISLYQRF…GYMSTPPPVK (113 aa)). The chain crosses the membrane as a helical span at residues 136 to 156 (VLIPVHLITSGVWFGTFYYAA). A coiled-coil region spans residues 229 to 271 (KEYLQDRMEETKELITEKMEETKDRLTEKLQETKEKVSFKKKV). The disordered stretch occupies residues 246–272 (KMEETKDRLTEKLQETKEKVSFKKKVE).

The protein belongs to the FAM210 family. Interacts with ATAD3A.

Its subcellular location is the membrane. It localises to the mitochondrion. The protein localises to the cytoplasm. Functionally, may play a role in the structure and strength of both muscle and bone. This is Protein FAM210A (FAM210A) from Pongo abelii (Sumatran orangutan).